Reading from the N-terminus, the 650-residue chain is Serine/threonine-protein kinase oca2 (650 aa).

The segment covering 1–14 has biased composition (polar residues); sequence MSVTPPNVQFNLNG. 2 disordered regions span residues 1 to 210 and 222 to 288; these read MSVT…PHDI and HHGK…KSSA. A Phosphoserine modification is found at S72. Positions 78–98 are enriched in basic and acidic residues; the sequence is NHIDPKLAEDRYRSSAARHFE. Positions 140–154 are enriched in polar residues; sequence PSGSTGYTSPALSQN. Composition is skewed to basic residues over residues 222–231 and 245–257; these read HHGKHGHHGH and HDKHDKHDKHEKH. The span at 258–279 shows a compositional bias: basic and acidic residues; that stretch reads HSSLDLRRFFKSHQKTDKEKKP. Position 286 is a phosphoserine (S286). Residues 302 to 614 form the Protein kinase domain; sequence GKFGRMLGSG…IHRVFADNWI (313 aa). ATP-binding positions include 308-316 and K331; that span reads LGSGAGGSV. The Proton acceptor role is filled by D425. Residues 549–570 form a disordered region; sequence PIRKTDESHSPNSKTDNSSTHK.

It belongs to the protein kinase superfamily. Ser/Thr protein kinase family.

The protein resides in the cytoplasm. The enzyme catalyses L-seryl-[protein] + ATP = O-phospho-L-seryl-[protein] + ADP + H(+). It catalyses the reaction L-threonyl-[protein] + ATP = O-phospho-L-threonyl-[protein] + ADP + H(+). In terms of biological role, overexpression causes cell cycle arrest. This is Serine/threonine-protein kinase oca2 from Schizosaccharomyces pombe (strain 972 / ATCC 24843) (Fission yeast).